Consider the following 327-residue polypeptide: Aspartate--ammonia ligase (327 aa).

This sequence belongs to the class-II aminoacyl-tRNA synthetase family. AsnA subfamily.

It is found in the cytoplasm. It carries out the reaction L-aspartate + NH4(+) + ATP = L-asparagine + AMP + diphosphate + H(+). It functions in the pathway amino-acid biosynthesis; L-asparagine biosynthesis; L-asparagine from L-aspartate (ammonia route): step 1/1. The polypeptide is Aspartate--ammonia ligase (Bacillus cereus (strain B4264)).